We begin with the raw amino-acid sequence, 261 residues long: Putative [LysW]-aminoadipate/[LysW]-glutamate kinase (261 aa).

Substrate contacts are provided by residues 35–36, R62, and N162; that span reads GG.

This sequence belongs to the acetylglutamate kinase family. LysZ subfamily.

It is found in the cytoplasm. It carries out the reaction [amino-group carrier protein]-C-terminal-N-(1,4-dicarboxybutan-1-yl)-L-glutamine + ATP = [amino-group carrier protein]-C-terminal-N-(1-carboxy-5-phosphooxy-5-oxopentan-1-yl)-L-glutamine + ADP. The enzyme catalyses [amino-group carrier protein]-C-terminal-gamma-(L-glutamyl)-L-glutamate + ATP = [amino-group carrier protein]-C-terminal-gamma-(5-phospho-L-glutamyl)-L-glutamate + ADP. Its pathway is amino-acid biosynthesis; L-lysine biosynthesis via AAA pathway; L-lysine from L-alpha-aminoadipate (Thermus route): step 2/5. The protein operates within amino-acid biosynthesis; L-arginine biosynthesis. Involved in both the arginine and lysine biosynthetic pathways. Phosphorylates the LysW-bound precursors glutamate (for arginine biosynthesis), respectively alpha-aminoadipate (for lysine biosynthesis). This chain is Putative [LysW]-aminoadipate/[LysW]-glutamate kinase, found in Pyrobaculum calidifontis (strain DSM 21063 / JCM 11548 / VA1).